Here is a 97-residue protein sequence, read N- to C-terminus: Co-chaperonin GroES (97 aa).

The protein belongs to the GroES chaperonin family. Heptamer of 7 subunits arranged in a ring. Interacts with the chaperonin GroEL.

The protein resides in the cytoplasm. Together with the chaperonin GroEL, plays an essential role in assisting protein folding. The GroEL-GroES system forms a nano-cage that allows encapsulation of the non-native substrate proteins and provides a physical environment optimized to promote and accelerate protein folding. GroES binds to the apical surface of the GroEL ring, thereby capping the opening of the GroEL channel. The polypeptide is Co-chaperonin GroES (Yersinia pseudotuberculosis serotype O:1b (strain IP 31758)).